Consider the following 359-residue polypeptide: 3-dehydroquinate synthase (359 aa).

Residues 106–110 (GVVGD), 130–131 (TS), Lys-143, and Lys-152 each bind NAD(+). Zn(2+)-binding residues include Glu-185, His-246, and His-263.

The protein belongs to the sugar phosphate cyclases superfamily. Dehydroquinate synthase family. Requires Co(2+) as cofactor. The cofactor is Zn(2+). NAD(+) serves as cofactor.

The protein resides in the cytoplasm. It carries out the reaction 7-phospho-2-dehydro-3-deoxy-D-arabino-heptonate = 3-dehydroquinate + phosphate. It functions in the pathway metabolic intermediate biosynthesis; chorismate biosynthesis; chorismate from D-erythrose 4-phosphate and phosphoenolpyruvate: step 2/7. Functionally, catalyzes the conversion of 3-deoxy-D-arabino-heptulosonate 7-phosphate (DAHP) to dehydroquinate (DHQ). This chain is 3-dehydroquinate synthase, found in Clostridium kluyveri (strain ATCC 8527 / DSM 555 / NBRC 12016 / NCIMB 10680 / K1).